The chain runs to 292 residues: GTP cyclohydrolase FolE2 (292 aa).

The protein belongs to the GTP cyclohydrolase IV family.

The catalysed reaction is GTP + H2O = 7,8-dihydroneopterin 3'-triphosphate + formate + H(+). The protein operates within cofactor biosynthesis; 7,8-dihydroneopterin triphosphate biosynthesis; 7,8-dihydroneopterin triphosphate from GTP: step 1/1. Functionally, converts GTP to 7,8-dihydroneopterin triphosphate. This chain is GTP cyclohydrolase FolE2, found in Macrococcus caseolyticus (strain JCSC5402) (Macrococcoides caseolyticum).